Reading from the N-terminus, the 137-residue chain is MNNSLESTKQLLDVVKFDSNGLVPAIVQDVESGKVLMMAWMNRESLAMTLEKKVACYWSRSRKELWLKGETSGNMQQVHDVLIDCDGDTLLLKVSQKGGACHVGYHSCFYRKATENGSLEICDTLMFNPEEVYGKKS.

D84 contributes to the Mg(2+) binding site. Residue C85 participates in Zn(2+) binding. The Mg(2+) site is built by D86 and D88. Zn(2+) contacts are provided by C101 and C108.

Belongs to the PRA-CH family. Homodimer. It depends on Mg(2+) as a cofactor. The cofactor is Zn(2+).

The protein localises to the cytoplasm. The catalysed reaction is 1-(5-phospho-beta-D-ribosyl)-5'-AMP + H2O = 1-(5-phospho-beta-D-ribosyl)-5-[(5-phospho-beta-D-ribosylamino)methylideneamino]imidazole-4-carboxamide. The protein operates within amino-acid biosynthesis; L-histidine biosynthesis; L-histidine from 5-phospho-alpha-D-ribose 1-diphosphate: step 3/9. Its function is as follows. Catalyzes the hydrolysis of the adenine ring of phosphoribosyl-AMP. The protein is Phosphoribosyl-AMP cyclohydrolase of Chlorobium chlorochromatii (strain CaD3).